The following is a 111-amino-acid chain: Large ribosomal subunit protein P2w (111 aa).

The segment at 63–111 (ASVPSGGGVAVSAAPSSGGGGAAAPAEKKEAKKEEKEESDDDMGFSLFE) is disordered. Over residues 88–98 (AEKKEAKKEEK) the composition is skewed to basic and acidic residues. The residue at position 101 (serine 101) is a Phosphoserine.

This sequence belongs to the eukaryotic ribosomal protein P1/P2 family. In terms of assembly, P1 and P2 exist as dimers at the large ribosomal subunit.

Functionally, plays an important role in the elongation step of protein synthesis. The polypeptide is Large ribosomal subunit protein P2w (RPP2D) (Arabidopsis thaliana (Mouse-ear cress)).